We begin with the raw amino-acid sequence, 86 residues long: UPF0297 protein BBR47_19030 (86 aa).

The protein belongs to the UPF0297 family.

This chain is UPF0297 protein BBR47_19030, found in Brevibacillus brevis (strain 47 / JCM 6285 / NBRC 100599).